We begin with the raw amino-acid sequence, 66 residues long: Phylloseptin-H9 (66 aa).

The signal sequence occupies residues 1–22 (MAFLKKSLFLVLFLGLVSLSIC). A propeptide spanning residues 23–44 (EEEKRETEEEENDQEEDDKSEE) is cleaved from the precursor. A disordered region spans residues 24–44 (EEKRETEEEENDQEEDDKSEE). The span at 30–41 (EEEENDQEEDDK) shows a compositional bias: acidic residues. At L65 the chain carries Leucine amide.

Expressed by the skin glands.

The protein localises to the secreted. Functionally, has antimicrobial activity. The sequence is that of Phylloseptin-H9 from Pithecopus hypochondrialis (Orange-legged leaf frog).